The chain runs to 494 residues: Transmembrane and coiled-coil domain-containing protein 6 (494 aa).

Positions 15 to 39 (GVEELRRRRREREAALRKARREQQL) form a coiled coil. 2 helical membrane-spanning segments follow: residues 338 to 358 (LVAA…ALLP) and 386 to 406 (PLLQ…TVLC).

It is found in the membrane. This Mus musculus (Mouse) protein is Transmembrane and coiled-coil domain-containing protein 6 (Tmco6).